Reading from the N-terminus, the 880-residue chain is Zinc-responsive transcriptional regulator ZAP1 (880 aa).

2 disordered regions span residues 1 to 26 and 140 to 164; these read MDAL…AASA and NNFH…PRRK. A compositionally biased stretch (low complexity) spans 17-26; sequence ATSAATAASA. Over residues 147-158 the composition is skewed to polar residues; sequence SDPTSPQQNSKS. Phosphoserine occurs at positions 156 and 166. Residues 182 to 502 are zinc-responsive domain 1 (ZRD(AD1)); sequence KPNPPPGSDD…LTNNDLNDLI (321 aa). The transcription activation domain 1 (AD1) stretch occupies residues 207 to 402; it reads HPKSEANIKQ…YEVPFGKHIN (196 aa). Disordered regions lie at residues 436-482 and 510-555; these read NRCN…VNNS and RFRN…PSSI. A compositionally biased stretch (low complexity) spans 442–456; sequence NNLNGSNNNTAGATS. A compositionally biased stretch (basic residues) spans 460–474; the sequence is QHHHHRIQFHSHKPN. S515 is subject to Phosphoserine. Residues 545–555 are compositionally biased toward low complexity; sequence SSLEDSLPSSI. The C2H2-type 1 zinc finger occupies 579-604; that stretch reads LKCKWKECPESCSSLFDLQRHLLKDH. Residues 579–641 form a zinc-responsive domain 2 (ZRD(AD2)) region; it reads LKCKWKECPE…SIVNHINCQH (63 aa). The Zn(2+) site is built by C581, C586, H599, H604, C618, C623, H636, and H641. The segment at 611–640 is transcription activation domain 2 (AD2); that stretch reads HPMEPLACNWEDCDFLGDDTCSIVNHINCQ. Residues 616–641 form a C2H2-type 2; atypical zinc finger; sequence LACNWEDCDFLGDDTCSIVNHINCQH. 5 C2H2-type zinc fingers span residues 705 to 730, 738 to 762, 768 to 790, 796 to 818, and 824 to 846; these read VICQ…EAVH, YQCL…LKVH, YKCK…TRTH, YKCH…IRTH, and LQCK…IKTH. Positions 705–846 form a DNA-binding region, DNA-binding domain; sequence VICQWDGCNK…SNLSKHIKTH (142 aa).

It localises to the nucleus. Its activity is regulated as follows. Active in zinc-limited cells and repressed in replete cells. Zinc controls ZAP1 DNA binding activity. Transcription regulator controlling zinc-responsive gene expression. Binds to zinc-responsive elements (ZREs) (consensus sequence 5'-ACCYYNAAGGT-3') in the promoter of target genes. Recruits SWI/SNF, SAGA, and Mediator complexes as coactivators in a zinc-responsive manner. Involved in zinc ion homeostasis by zinc-responsive transcriptional regulation of the zinc uptake system genes ZTR1 and ZTR2. Positively regulates ETR1 expression, affecting mitochondrial function. In Saccharomyces cerevisiae (strain ATCC 204508 / S288c) (Baker's yeast), this protein is Zinc-responsive transcriptional regulator ZAP1 (ZAP1).